The following is a 191-amino-acid chain: Corrinoid adenosyltransferase (191 aa).

ATP is bound by residues 10 to 18 (TRTGDNGTT), lysine 28, 140 to 145 (RRAERS), and asparagine 166.

The protein belongs to the Cob(I)alamin adenosyltransferase family.

Its subcellular location is the cytoplasm. The enzyme catalyses 2 cob(II)yrinate a,c diamide + reduced [electron-transfer flavoprotein] + 2 ATP = 2 adenosylcob(III)yrinate a,c-diamide + 2 triphosphate + oxidized [electron-transfer flavoprotein] + 3 H(+). It carries out the reaction 2 cob(II)alamin + reduced [electron-transfer flavoprotein] + 2 ATP = 2 adenosylcob(III)alamin + 2 triphosphate + oxidized [electron-transfer flavoprotein] + 3 H(+). Its pathway is cofactor biosynthesis; adenosylcobalamin biosynthesis; adenosylcobalamin from cob(II)yrinate a,c-diamide: step 2/7. This Mycobacterium leprae (strain TN) protein is Corrinoid adenosyltransferase.